Here is a 167-residue protein sequence, read N- to C-terminus: Biotin carboxyl carrier protein of acetyl-CoA carboxylase (167 aa).

Positions 53–91 (SGFSQERPIPTDPKKDTIKETTTENSETSTTTSSGDFIS) are disordered. Residues 64 to 74 (DPKKDTIKETT) show a composition bias toward basic and acidic residues. The segment covering 75 to 86 (TENSETSTTTSS) has biased composition (low complexity). The Biotinyl-binding domain occupies 87 to 163 (GDFISSPLVG…QFGSKLFRIA (77 aa)). At K129 the chain carries N6-biotinyllysine.

Homodimer.

The protein operates within lipid metabolism; fatty acid biosynthesis. This protein is a component of the acetyl coenzyme A carboxylase complex; first, biotin carboxylase catalyzes the carboxylation of the carrier protein and then the transcarboxylase transfers the carboxyl group to form malonyl-CoA. The chain is Biotin carboxyl carrier protein of acetyl-CoA carboxylase (accB) from Chlamydia pneumoniae (Chlamydophila pneumoniae).